A 910-amino-acid polypeptide reads, in one-letter code: Coatomer subunit beta'-2 (910 aa).

WD repeat units follow at residues 13–52, 55–94, 97–136, 140–180, 183–224, 227–266, 269–309, 351–393, and 461–501; these read QRSE…MVKS, VTEL…KVKV, AHTD…MCTQ, GHSH…PNFT, GHSK…CVQT, GHAH…LENT, YGLE…ASMD, TCDL…GSAL, and RIDV…SHLD. The disordered stretch occupies residues 882-910; that stretch reads ADGSTDGAVLVNGNDTEEQWGTNNEESSA. The segment covering 900–910 has biased composition (polar residues); the sequence is QWGTNNEESSA.

Belongs to the WD repeat COPB2 family. As to quaternary structure, oligomeric complex that consists of at least the alpha, beta, beta', gamma, delta, epsilon and zeta subunits.

It is found in the cytoplasm. The protein resides in the golgi apparatus membrane. It localises to the cytoplasmic vesicle. Its subcellular location is the COPI-coated vesicle membrane. The coatomer is a cytosolic protein complex that binds to dilysine motifs and reversibly associates with Golgi non-clathrin-coated vesicles, which further mediate biosynthetic protein transport from the ER, via the Golgi up to the trans Golgi network. Coatomer complex is required for budding from Golgi membranes, and is essential for the retrograde Golgi-to-ER transport of dilysine-tagged proteins. The chain is Coatomer subunit beta'-2 from Oryza sativa subsp. japonica (Rice).